The sequence spans 284 residues: Averufin oxidase A (284 aa).

An N-terminal signal peptide occupies residues methionine 1–alanine 23. N-linked (GlcNAc...) asparagine glycans are attached at residues asparagine 62, asparagine 86, and asparagine 190.

Belongs to the avfA family.

It participates in mycotoxin biosynthesis. Its function is as follows. Averufin oxidase A; part of the fragmented gene cluster that mediates the biosynthesis of dothistromin (DOTH), a polyketide toxin very similar in structure to the aflatoxin precursor, versicolorin B. The first step of the pathway is the conversion of acetate to norsolorinic acid (NOR) and requires the fatty acid synthase subunits hexA and hexB, as well as the polyketide synthase pksA. PksA combines a hexanoyl starter unit and 7 malonyl-CoA extender units to synthesize the precursor NOR. The hexanoyl starter unit is provided to the acyl-carrier protein (ACP) domain by the fungal fatty acid synthase hexA/hexB. The second step is the conversion of NOR to averantin (AVN) and requires the norsolorinic acid ketoreductase nor1, which catalyzes the dehydration of norsolorinic acid to form (1'S)-averantin. The cytochrome P450 monooxygenase avnA then catalyzes the hydroxylation of AVN to 5'hydroxyaverantin (HAVN). The next step is performed by adhA that transforms HAVN to averufin (AVF). Averufin might then be converted to hydroxyversicolorone by cypX and avfA. Hydroxyversicolorone is further converted versiconal hemiacetal acetate (VHA) by moxY. VHA is then the substrate for the versiconal hemiacetal acetate esterase est1 to yield versiconal (VAL). Versicolorin B synthase vbsA then converts VAL to versicolorin B (VERB) by closing the bisfuran ring. Then, the activity of the versicolorin B desaturase verB leads to versicolorin A (VERA). DotB, a predicted chloroperoxidase, may perform epoxidation of the A-ring of VERA. Alternatively, a cytochrome P450, such as cypX or avnA could catalyze this step. It is also possible that another, uncharacterized, cytochrome P450 enzyme is responsible for this step. Opening of the epoxide could potentially be achieved by the epoxide hydrolase epoA. However, epoA seems not to be required for DOTH biosynthesis, but other epoxide hydrolases may have the ability to complement this hydrolysis. Alternatively, opening of the epoxide ring could be achieved non-enzymatically. The next step is the deoxygenation of ring A to yield the 5,8-dihydroxyanthraquinone which is most likely catalyzed by the NADPH dehydrogenase encoded by ver1. The last stages of DOTH biosynthesis are proposed to involve hydroxylation of the bisfuran. OrdB and norB might have oxidative roles here. An alternative possibility is that cytochrome P450 monoogenases such as avnA and cypX might perform these steps in addition to previously proposed steps. In Dothistroma septosporum (strain NZE10 / CBS 128990) (Red band needle blight fungus), this protein is Averufin oxidase A.